A 273-amino-acid chain; its full sequence is Dermonecrotic toxin LsaSicTox-alphaIB1bii (273 aa).

Residue H5 is part of the active site. Positions 25 and 27 each coordinate Mg(2+). The Nucleophile role is filled by H41. 2 cysteine pairs are disulfide-bonded: C45-C51 and C47-C190. D85 contacts Mg(2+).

It belongs to the arthropod phospholipase D family. Class II subfamily. Mg(2+) is required as a cofactor. Expressed by the venom gland.

The protein resides in the secreted. The enzyme catalyses an N-(acyl)-sphingosylphosphocholine = an N-(acyl)-sphingosyl-1,3-cyclic phosphate + choline. It catalyses the reaction an N-(acyl)-sphingosylphosphoethanolamine = an N-(acyl)-sphingosyl-1,3-cyclic phosphate + ethanolamine. The catalysed reaction is a 1-acyl-sn-glycero-3-phosphocholine = a 1-acyl-sn-glycero-2,3-cyclic phosphate + choline. It carries out the reaction a 1-acyl-sn-glycero-3-phosphoethanolamine = a 1-acyl-sn-glycero-2,3-cyclic phosphate + ethanolamine. Functionally, dermonecrotic toxins cleave the phosphodiester linkage between the phosphate and headgroup of certain phospholipids (sphingolipid and lysolipid substrates), forming an alcohol (often choline) and a cyclic phosphate. This toxin acts on sphingomyelin (SM). It may also act on ceramide phosphoethanolamine (CPE), lysophosphatidylcholine (LPC) and lysophosphatidylethanolamine (LPE), but not on lysophosphatidylserine (LPS), and lysophosphatidylglycerol (LPG). It acts by transphosphatidylation, releasing exclusively cyclic phosphate products as second products. Induces dermonecrosis, hemolysis, increased vascular permeability, edema, inflammatory response, and platelet aggregation. The protein is Dermonecrotic toxin LsaSicTox-alphaIB1bii of Loxosceles sabina (Tucson recluse spider).